Here is a 200-residue protein sequence, read N- to C-terminus: Urease accessory protein UreG (200 aa).

Gly-11–Thr-18 contacts GTP.

It belongs to the SIMIBI class G3E GTPase family. UreG subfamily. In terms of assembly, homodimer. UreD, UreF and UreG form a complex that acts as a GTP-hydrolysis-dependent molecular chaperone, activating the urease apoprotein by helping to assemble the nickel containing metallocenter of UreC. The UreE protein probably delivers the nickel.

The protein localises to the cytoplasm. In terms of biological role, facilitates the functional incorporation of the urease nickel metallocenter. This process requires GTP hydrolysis, probably effectuated by UreG. In Thermosynechococcus vestitus (strain NIES-2133 / IAM M-273 / BP-1), this protein is Urease accessory protein UreG.